The chain runs to 299 residues: Light-independent protochlorophyllide reductase iron-sulfur ATP-binding protein (299 aa).

The tract at residues 1-23 is disordered; sequence MSPLDRTPPSLRGQDGEGSVQVH. Residues 43 to 48 and K72 each bind ATP; that span reads GIGKST. A Mg(2+)-binding site is contributed by S47. 2 residues coordinate [4Fe-4S] cluster: C128 and C162. ATP contacts are provided by residues 213-214 and 237-239; these read NR and PDL.

It belongs to the NifH/BchL/ChlL family. As to quaternary structure, homodimer. Protochlorophyllide reductase is composed of three subunits; BchL, BchN and BchB. [4Fe-4S] cluster serves as cofactor.

It carries out the reaction chlorophyllide a + oxidized 2[4Fe-4S]-[ferredoxin] + 2 ADP + 2 phosphate = protochlorophyllide a + reduced 2[4Fe-4S]-[ferredoxin] + 2 ATP + 2 H2O. The protein operates within porphyrin-containing compound metabolism; bacteriochlorophyll biosynthesis (light-independent). Component of the dark-operative protochlorophyllide reductase (DPOR) that uses Mg-ATP and reduced ferredoxin to reduce ring D of protochlorophyllide (Pchlide) to form chlorophyllide a (Chlide). This reaction is light-independent. The L component serves as a unique electron donor to the NB-component of the complex, and binds Mg-ATP. This is Light-independent protochlorophyllide reductase iron-sulfur ATP-binding protein from Roseobacter denitrificans (strain ATCC 33942 / OCh 114) (Erythrobacter sp. (strain OCh 114)).